The primary structure comprises 249 residues: 1-(5-phosphoribosyl)-5-[(5-phosphoribosylamino)methylideneamino] imidazole-4-carboxamide isomerase (249 aa).

Asp-8 functions as the Proton acceptor in the catalytic mechanism. The active-site Proton donor is the Asp-129.

It belongs to the HisA/HisF family.

The protein localises to the cytoplasm. The enzyme catalyses 1-(5-phospho-beta-D-ribosyl)-5-[(5-phospho-beta-D-ribosylamino)methylideneamino]imidazole-4-carboxamide = 5-[(5-phospho-1-deoxy-D-ribulos-1-ylimino)methylamino]-1-(5-phospho-beta-D-ribosyl)imidazole-4-carboxamide. Its pathway is amino-acid biosynthesis; L-histidine biosynthesis; L-histidine from 5-phospho-alpha-D-ribose 1-diphosphate: step 4/9. This chain is 1-(5-phosphoribosyl)-5-[(5-phosphoribosylamino)methylideneamino] imidazole-4-carboxamide isomerase, found in Nitratidesulfovibrio vulgaris (strain ATCC 29579 / DSM 644 / CCUG 34227 / NCIMB 8303 / VKM B-1760 / Hildenborough) (Desulfovibrio vulgaris).